The chain runs to 348 residues: Uroporphyrinogen decarboxylase (348 aa).

Substrate is bound by residues 28-32, D78, Y154, T209, and H325; that span reads RQAGR.

Belongs to the uroporphyrinogen decarboxylase family. In terms of assembly, homodimer.

It is found in the cytoplasm. It carries out the reaction uroporphyrinogen III + 4 H(+) = coproporphyrinogen III + 4 CO2. Its pathway is porphyrin-containing compound metabolism; protoporphyrin-IX biosynthesis; coproporphyrinogen-III from 5-aminolevulinate: step 4/4. Its function is as follows. Catalyzes the decarboxylation of four acetate groups of uroporphyrinogen-III to yield coproporphyrinogen-III. The chain is Uroporphyrinogen decarboxylase from Rhodopseudomonas palustris (strain BisA53).